Consider the following 1323-residue polypeptide: DNA-directed RNA polymerase subunit beta' (1323 aa).

Zn(2+)-binding residues include cysteine 60, cysteine 62, cysteine 75, and cysteine 78. Residues aspartate 535, aspartate 537, and aspartate 539 each contribute to the Mg(2+) site. The Zn(2+) site is built by cysteine 894, cysteine 977, cysteine 984, and cysteine 987.

It belongs to the RNA polymerase beta' chain family. In terms of assembly, the RNAP catalytic core consists of 2 alpha, 1 beta, 1 beta' and 1 omega subunit. When a sigma factor is associated with the core the holoenzyme is formed, which can initiate transcription. Requires Mg(2+) as cofactor. Zn(2+) is required as a cofactor.

The enzyme catalyses RNA(n) + a ribonucleoside 5'-triphosphate = RNA(n+1) + diphosphate. Its function is as follows. DNA-dependent RNA polymerase catalyzes the transcription of DNA into RNA using the four ribonucleoside triphosphates as substrates. This Corynebacterium jeikeium (strain K411) protein is DNA-directed RNA polymerase subunit beta'.